We begin with the raw amino-acid sequence, 947 residues long: Translation initiation factor IF-2 (947 aa).

Positions Ile-61–Ile-284 are disordered. A compositionally biased stretch (basic and acidic residues) spans Gln-151–Leu-169. Low complexity predominate over residues Ser-175 to Asn-188. Residues Ala-189–His-206 show a composition bias toward basic and acidic residues. The span at Glu-207–Ile-218 shows a compositional bias: basic residues. Residues Glu-247–Lys-262 are compositionally biased toward basic and acidic residues. The tr-type G domain maps to Glu-446–Lys-615. The G1 stretch occupies residues Gly-455–Thr-462. Gly-455–Thr-462 contacts GTP. The tract at residues Gly-480 to His-484 is G2. Residues Asp-501–Gly-504 form a G3 region. Residues Asp-501 to His-505 and Asn-555 to Asp-558 contribute to the GTP site. Residues Asn-555 to Asp-558 form a G4 region. Residues Ser-591–Lys-593 are G5.

The protein belongs to the TRAFAC class translation factor GTPase superfamily. Classic translation factor GTPase family. IF-2 subfamily.

It is found in the cytoplasm. In terms of biological role, one of the essential components for the initiation of protein synthesis. Protects formylmethionyl-tRNA from spontaneous hydrolysis and promotes its binding to the 30S ribosomal subunits. Also involved in the hydrolysis of GTP during the formation of the 70S ribosomal complex. In Helicobacter pylori (strain P12), this protein is Translation initiation factor IF-2.